The sequence spans 64 residues: Large ribosomal subunit protein bL32 (64 aa).

It belongs to the bacterial ribosomal protein bL32 family.

The polypeptide is Large ribosomal subunit protein bL32 (Flavobacterium johnsoniae (strain ATCC 17061 / DSM 2064 / JCM 8514 / BCRC 14874 / CCUG 350202 / NBRC 14942 / NCIMB 11054 / UW101) (Cytophaga johnsonae)).